Consider the following 245-residue polypeptide: tRNA pseudouridine synthase A (245 aa).

Asp-52 functions as the Nucleophile in the catalytic mechanism. Residue Tyr-111 coordinates substrate.

Belongs to the tRNA pseudouridine synthase TruA family. As to quaternary structure, homodimer.

It carries out the reaction uridine(38/39/40) in tRNA = pseudouridine(38/39/40) in tRNA. Formation of pseudouridine at positions 38, 39 and 40 in the anticodon stem and loop of transfer RNAs. This is tRNA pseudouridine synthase A from Thermotoga neapolitana (strain ATCC 49049 / DSM 4359 / NBRC 107923 / NS-E).